A 293-amino-acid chain; its full sequence is SAGA-associated factor 29 (293 aa).

Residues 3-88 adopt a coiled-coil conformation; sequence LVSADSRIAE…KALDKIAEIK (86 aa). Positions 152–293 constitute an SGF29 C-terminal domain; it reads GDYVAKPGDK…VVACKEPKKK (142 aa). 2 histone H3K4me3 N-terminus binding regions span residues 194–196 and 240–243; these read DID and QTTC. Residues 264–266 are histone H3K4me3 binding; the sequence is FED. Lys288 bears the N6-acetyllysine mark.

It belongs to the SGF29 family. Interacts with dimethylated and trimethylated 'Lys-4' of histone H3 (H3K4me2 and H3K4me3), with a preference for the trimethylated form (H3K4me3). Component of some SAGA-type complexes. Component of the ADA2A-containing complex (ATAC), composed of KAT14, KAT2A, TADA2L, TADA3L, ZZ3, MBIP, WDR5, YEATS2, CCDC101 and DR1. Interacts with (methylated) CGAS. Interacts with TADA3L, GCN5L2, SUPT3H and MYC. Widely expressed with highest levels in testis. Highly expressed in hepatoma and other tumor cell lines.

Its subcellular location is the nucleus. Functionally, chromatin reader component of some histone acetyltransferase (HAT) SAGA-type complexes like the TFTC-HAT, ATAC or STAGA complexes. SGF29 specifically recognizes and binds methylated 'Lys-4' of histone H3 (H3K4me), with a preference for trimethylated form (H3K4me3). In the SAGA-type complexes, SGF29 is required to recruit complexes to H3K4me. Involved in the response to endoplasmic reticulum (ER) stress by recruiting the SAGA complex to H3K4me, thereby promoting histone H3 acetylation and cell survival. Also binds non-histone proteins that are methylated on Lys residues: specifically recognizes and binds CGAS monomethylated on 'Lys-491'. May be involved in MYC-mediated oncogenic transformation. The sequence is that of SAGA-associated factor 29 from Rattus norvegicus (Rat).